A 569-amino-acid chain; its full sequence is Urease subunit alpha (569 aa).

In terms of domain architecture, Urease spans 131–569 (GAIDSHIHFI…LPLAQRYLLL (439 aa)). His-136, His-138, and Lys-219 together coordinate Ni(2+). Residue Lys-219 is modified to N6-carboxylysine. His-221 contacts substrate. Ni(2+)-binding residues include His-248 and His-274. The active-site Proton donor is the His-322. Asp-362 is a binding site for Ni(2+).

Belongs to the metallo-dependent hydrolases superfamily. Urease alpha subunit family. In terms of assembly, heterotrimer of UreA (gamma), UreB (beta) and UreC (alpha) subunits. Three heterotrimers associate to form the active enzyme. Ni cation is required as a cofactor. In terms of processing, carboxylation allows a single lysine to coordinate two nickel ions.

It localises to the cytoplasm. The catalysed reaction is urea + 2 H2O + H(+) = hydrogencarbonate + 2 NH4(+). Its pathway is nitrogen metabolism; urea degradation; CO(2) and NH(3) from urea (urease route): step 1/1. The chain is Urease subunit alpha from Prochlorococcus marinus (strain NATL1A).